The following is a 551-amino-acid chain: MSFQELLNQVGSLGRFQILQIVFLLLLNAIVVPHIAMENFTAAIPNHRCWVPILDNDTASDNGSRILSQDDLLRISIPLDSNLRPEKCRRFAQPQWHLLHLNGTFSNVSEPDTEPCVDGWVYDRSNFLSTIVTEWDLVCESQALNSVTKFSFMIGLFIGGIICGHLSDRLGRKFILTCALLQFAITETCVAFAPSFFIYCSLRFLAGLSVEPILVNSHLLMLEWTSPKFLTMMAALLSCAPNIGYMISAGLAFLFRIWHHLQLTMSVPIFFFLILTRWLSESARWLIVTNKPQKGLKELRKVAHMNGMKNSGDLTMEIVRTSMKAELEAAKTKPSLRDLFHTSILRKRICVLSFMRLFFTVSIFGLAVHLQHLSSNIILLQFLISALAILVSVIGPFVLNHIGRRITYLVLMSLRGIFILIAVFVPQEMQTLRIIMATLAEGISSLCVGVSRLHTNELLPTTLRATAVGVIGFFGNSGSFLSPLFMLLATYYANMPWIFYGGFSIFNAFTVFLLPETKNQPLPDSTHDVGNDWKESRKGKKEDPIIKVTRF.

Residues 1–15 are Cytoplasmic-facing; it reads MSFQELLNQVGSLGR. The chain crosses the membrane as a helical span at residues 16 to 36; it reads FQILQIVFLLLLNAIVVPHIA. Over 37-145 the chain is Extracellular; the sequence is MENFTAAIPN…DLVCESQALN (109 aa). N-linked (GlcNAc...) asparagine glycosylation is found at asparagine 39, asparagine 56, asparagine 62, asparagine 102, and asparagine 107. Residues 146–166 form a helical membrane-spanning segment; that stretch reads SVTKFSFMIGLFIGGIICGHL. Residues 167-173 are Cytoplasmic-facing; the sequence is SDRLGRK. A helical transmembrane segment spans residues 174–194; that stretch reads FILTCALLQFAITETCVAFAP. The Extracellular segment spans residues 195 to 203; it reads SFFIYCSLR. A helical membrane pass occupies residues 204-224; that stretch reads FLAGLSVEPILVNSHLLMLEW. The Cytoplasmic segment spans residues 225–234; the sequence is TSPKFLTMMA. A helical transmembrane segment spans residues 235–255; it reads ALLSCAPNIGYMISAGLAFLF. Residues 256 to 258 lie on the Extracellular side of the membrane; sequence RIW. A helical transmembrane segment spans residues 259-279; that stretch reads HHLQLTMSVPIFFFLILTRWL. Over 280–348 the chain is Cytoplasmic; sequence SESARWLIVT…LFHTSILRKR (69 aa). The chain crosses the membrane as a helical span at residues 349–369; it reads ICVLSFMRLFFTVSIFGLAVH. Residues 370 to 376 lie on the Extracellular side of the membrane; that stretch reads LQHLSSN. The helical transmembrane segment at 377-397 threads the bilayer; sequence IILLQFLISALAILVSVIGPF. Residues 398 to 405 lie on the Cytoplasmic side of the membrane; it reads VLNHIGRR. A helical membrane pass occupies residues 406 to 426; the sequence is ITYLVLMSLRGIFILIAVFVP. The Extracellular portion of the chain corresponds to 427-432; sequence QEMQTL. The helical transmembrane segment at 433 to 453 threads the bilayer; sequence RIIMATLAEGISSLCVGVSRL. Residues 454–467 lie on the Cytoplasmic side of the membrane; that stretch reads HTNELLPTTLRATA. The helical transmembrane segment at 468-488 threads the bilayer; the sequence is VGVIGFFGNSGSFLSPLFMLL. Topologically, residues 489 to 494 are extracellular; the sequence is ATYYAN. Residues 495–515 form a helical membrane-spanning segment; it reads MPWIFYGGFSIFNAFTVFLLP. Residues 516 to 551 lie on the Cytoplasmic side of the membrane; that stretch reads ETKNQPLPDSTHDVGNDWKESRKGKKEDPIIKVTRF. The tract at residues 523 to 551 is disordered; that stretch reads PDSTHDVGNDWKESRKGKKEDPIIKVTRF. Over residues 525–545 the composition is skewed to basic and acidic residues; the sequence is STHDVGNDWKESRKGKKEDPI.

Belongs to the major facilitator (TC 2.A.1) superfamily. Organic cation transporter (TC 2.A.1.19) family. As to expression, expressed in proximal kidney tubules, and in liver hepatocytes (at protein level).

The protein localises to the cell membrane. In terms of biological role, does not appear to have transporter activity. Sodium-independent organic anion transporter which exhibits high specificity for L-carnitine. Can also transport salicylic acid and the drug cimetidine. The sequence is that of Solute carrier family 22 member 27 from Mus musculus (Mouse).